A 441-amino-acid polypeptide reads, in one-letter code: Putative serine/threonine-protein kinase F31E3.2 (441 aa).

A compositionally biased stretch (basic residues) spans 1–16 (MGNVATRKRPGCHHHI). Residues 1–41 (MGNVATRKRPGCHHHIGRNEENLDDDEDGPAKKRLRIGEPQ) form a disordered region. One can recognise a Protein kinase domain in the interval 126–381 (FVLERQLGRG…FTVLHAHPFF (256 aa)). ATP contacts are provided by residues 132–140 (LGRGSFGVV) and lysine 156. Catalysis depends on aspartate 253, which acts as the Proton acceptor.

It belongs to the protein kinase superfamily. Ser/Thr protein kinase family.

It catalyses the reaction L-seryl-[protein] + ATP = O-phospho-L-seryl-[protein] + ADP + H(+). The catalysed reaction is L-threonyl-[protein] + ATP = O-phospho-L-threonyl-[protein] + ADP + H(+). The protein is Putative serine/threonine-protein kinase F31E3.2 of Caenorhabditis elegans.